The primary structure comprises 250 residues: MKYNNHDKIRDFIIIEAYMFRFKKKVKPEVDMTIKEFILLTYLFHQQENTLPFKKIVSDLCYKQSDLVQHIKVLVKHSYISKVRSKIDERNTYISISEEQREKIAERVTLFDQIIKQFNLADQSESQMIPKDSKEFLNLMMYTMYFKNIIKKHLTLSFVEFTILAIITSQNKNIVLLKDLIETIHHKYPQTVRALNNLKKQGYLIKERSTEDERKILIHMDDAQQDHAEQLLAQVNQLLADKDHLHLVFE.

2 consecutive DNA-binding regions (H-T-H motif) follow at residues 53-76 and 177-200; these read FKKIVSDLCYKQSDLVQHIKVLVK and LKDLIETIHHKYPQTVRALNNLKK.

It belongs to the SarA family.

Its subcellular location is the cytoplasm. Transcriptional regulator that controls expression of some virulence factors in a cell density-dependent manner. This Staphylococcus aureus (strain Mu3 / ATCC 700698) protein is HTH-type transcriptional regulator SarS (sarS).